The primary structure comprises 393 residues: Formate-dependent phosphoribosylglycinamide formyltransferase (393 aa).

N(1)-(5-phospho-beta-D-ribosyl)glycinamide is bound by residues 22–23 (EL) and glutamate 82. ATP contacts are provided by residues arginine 114, lysine 155, 160-165 (SSGKGQ), 195-198 (EGFV), and glutamate 203. In terms of domain architecture, ATP-grasp spans 119-308 (RLAAEDLGIP…EFALHLRAIL (190 aa)). Mg(2+)-binding residues include glutamate 267 and glutamate 279. Residues aspartate 286, lysine 356, and 363–364 (RR) each bind N(1)-(5-phospho-beta-D-ribosyl)glycinamide.

It belongs to the PurK/PurT family. In terms of assembly, homodimer.

The enzyme catalyses N(1)-(5-phospho-beta-D-ribosyl)glycinamide + formate + ATP = N(2)-formyl-N(1)-(5-phospho-beta-D-ribosyl)glycinamide + ADP + phosphate + H(+). Its pathway is purine metabolism; IMP biosynthesis via de novo pathway; N(2)-formyl-N(1)-(5-phospho-D-ribosyl)glycinamide from N(1)-(5-phospho-D-ribosyl)glycinamide (formate route): step 1/1. Functionally, involved in the de novo purine biosynthesis. Catalyzes the transfer of formate to 5-phospho-ribosyl-glycinamide (GAR), producing 5-phospho-ribosyl-N-formylglycinamide (FGAR). Formate is provided by PurU via hydrolysis of 10-formyl-tetrahydrofolate. This chain is Formate-dependent phosphoribosylglycinamide formyltransferase, found in Hydrogenovibrio crunogenus (strain DSM 25203 / XCL-2) (Thiomicrospira crunogena).